The primary structure comprises 528 residues: Negative elongation factor A (528 aa).

Residues 89–248 (WVLMVADILK…TPIPPSRTLL (160 aa)) enclose the HDAg domain. Positions 125 to 188 (REKVGECEAS…LQKSTETAQQ (64 aa)) are NELF-C/D-binding. Thr157 carries the post-translational modification Phosphothreonine. The tract at residues 189 to 248 (LKRSAGVPFHAKGRGLLRKMDTTTPLKGIPKQAPFRSPTAPSVFSPTGNRTPIPPSRTLL) is RNAPII-binding. A disordered region spans residues 215–245 (KGIPKQAPFRSPTAPSVFSPTGNRTPIPPSR). A phosphoserine mark is found at Ser225 and Ser233. Over residues 227-238 (TAPSVFSPTGNR) the composition is skewed to polar residues. Phosphothreonine is present on Thr277. Positions 320-341 (PSTSYLPSTPSVVPASSYIPSS) are enriched in low complexity. The segment at 320–409 (PSTSYLPSTP…PPAVAPTTQT (90 aa)) is disordered. Ser363 is modified (phosphoserine).

This sequence belongs to the NELF-A family. As to quaternary structure, the NELF complex is composed of NELFA, NELFB, NELFCD (isoform NELF-C or isoform NELF-D) and NELFE; NELFA and NELFCD form a stable subcomplex that binds to the N-terminus of NELFB. In vitro, the NELFA:NELFCD subcomplex binds to ssDNA and ssRNA in a sequence- and structure-dependent manner. Interacts with the RNA polymerase II complex when it is not phosphorylated by P-TEFb. As to expression, ubiquitous. Expressed in heart, brain, placenta, liver, skeletal muscle, kidney and pancreas. Expressed at lower level in adult lung. Expressed in fetal brain, lung, liver and kidney.

It is found in the nucleus. In terms of biological role, essential component of the NELF complex, a complex that negatively regulates the elongation of transcription by RNA polymerase II. The NELF complex, which acts via an association with the DSIF complex and causes transcriptional pausing, is counteracted by the P-TEFb kinase complex. Functionally, (Microbial infection) The NELF complex is involved in HIV-1 latency possibly involving recruitment of PCF11 to paused RNA polymerase II. The polypeptide is Negative elongation factor A (NELFA) (Homo sapiens (Human)).